We begin with the raw amino-acid sequence, 412 residues long: uncharacterized protein (412 aa).

The span at 1 to 17 shows a compositional bias: polar residues; that stretch reads MPSQGNNKNSENITQNP. Disordered stretches follow at residues 1-20, 223-243, and 310-412; these read MPSQGNNKNSENITQNPIEG, EQAVGQPIEQQSISDDEARQT, and QKQM…NPVA. Residues 340–355 are compositionally biased toward polar residues; the sequence is KLNSNTRGSSKRPSVN. Residues 361–379 are compositionally biased toward gly residues; that stretch reads GQRGRGGRGFYRGGRGRGG. The segment covering 390–402 has biased composition (low complexity); it reads SNSNNSTSQPSPN. Over residues 403 to 412 the composition is skewed to polar residues; that stretch reads AELSNFNPVA.

This is an uncharacterized protein from Schizosaccharomyces pombe (strain 972 / ATCC 24843) (Fission yeast).